Here is a 186-residue protein sequence, read N- to C-terminus: Nucleoside diphosphate kinase, mitochondrial (186 aa).

The N-terminal 32 residues, 1–32 (MGSLFGRVAALRALLCGPRFQCLLVRPSSGGP), are a transit peptide targeting the mitochondrion. ATP-binding residues include K44, F92, R120, T126, R137, and N147. The active-site Pros-phosphohistidine intermediate is H150.

Belongs to the NDK family. In terms of assembly, homohexamer. Interacts with OPA1. Interacts with CAPN8. Mg(2+) serves as cofactor. In terms of tissue distribution, expressed in the base region of the oxyntic and pyloric mucosae.

The protein localises to the mitochondrion intermembrane space. Its subcellular location is the mitochondrion matrix. It catalyses the reaction a 2'-deoxyribonucleoside 5'-diphosphate + ATP = a 2'-deoxyribonucleoside 5'-triphosphate + ADP. It carries out the reaction a ribonucleoside 5'-diphosphate + ATP = a ribonucleoside 5'-triphosphate + ADP. Its function is as follows. Major role in the synthesis of nucleoside triphosphates other than ATP. The ATP gamma phosphate is transferred to the NDP beta phosphate via a ping-pong mechanism, using a phosphorylated active-site intermediate. Through the catalyzed exchange of gamma-phosphate between di- and triphosphonucleosides participates in regulation of intracellular nucleotide homeostasis. Binds to anionic phospholipids, predominantly to cardiolipin; the binding inhibits its phosphotransfer activity. Acts as a mitochondria-specific NDK; its association with cardiolipin-containing mitochondrial inner membrane is coupled to respiration suggesting that ADP locally regenerated in the mitochondrion innermembrane space by its activity is directly taken up via ANT ADP/ATP translocase into the matrix space to stimulate respiratory ATP regeneration. Proposed to increase GTP-loading on dynamin-related GTPase OPA1 in mitochondria. In vitro can induce liposome cross-linking suggesting that it can cross-link inner and outer membranes to form contact sites, and promotes intermembrane migration of anionic phosphoplipids. Promotes the redistribution of cardiolipin between the mitochondrial inner membrane and outer membrane which is implicated in pro-apoptotic signaling. This chain is Nucleoside diphosphate kinase, mitochondrial (Nme4), found in Mus musculus (Mouse).